Consider the following 60-residue polypeptide: Probable tautomerase SAG1079 (60 aa).

Pro2 serves as the catalytic Proton acceptor; via imino nitrogen.

It belongs to the 4-oxalocrotonate tautomerase family.

The sequence is that of Probable tautomerase SAG1079 from Streptococcus agalactiae serotype V (strain ATCC BAA-611 / 2603 V/R).